The chain runs to 349 residues: MPKLEQFEIKKYWQIFSGLKPIENKVNHDQVLPILYNSKLDSSVLNKIWFLADIDDDDNLDFEEFVICMRLIFDMVNKNISSVPDELPDWLIPGSKVNLIKERKKRKQIENADLPPKKEIKVDWYMSPDDLNQYEKIYNSCAKLTDGTITFNELSTKLSTKFFNISKTDLNKVWSLINPQNLPSIDRDPTFYFIHCLRQRNDLGAEIPASLPNSLAEVCNKKQLSYDLRSSQPPTKRKEEANEVDNLRDNGQNSSSDSSGSNVLSNEDSIKQKYASLTDDQVANMREQLEGLLNYKKSEKTQGGSKLSKRINIRSITDDLDNIEQQVEVLENYLNNKRHELQALQAEIN.

2 consecutive EH domains span residues 8-98 (EIKK…SKVN) and 130-222 (DLNQ…CNKK). The EF-hand 1 domain occupies 40–75 (LDSSVLNKIWFLADIDDDDNLDFEEFVICMRLIFDM). Ca(2+)-binding residues include D53, D55, D57, N59, and E64. Residues 96-105 (KVNLIKERKK) are polyphosphoinositide (PIP2)-binding. The 19-residue stretch at 146–164 (DGTITFNELSTKLSTKFFN) folds into the EF-hand 2 domain. The segment at 226–265 (YDLRSSQPPTKRKEEANEVDNLRDNGQNSSSDSSGSNVLS) is disordered. A compositionally biased stretch (basic and acidic residues) spans 236–248 (KRKEEANEVDNLR). Residues 249 to 265 (DNGQNSSSDSSGSNVLS) show a composition bias toward low complexity. At S276 the chain carries Phosphoserine. 2 consecutive repeat copies span residues 276–295 (SLTDDQVANMREQLEGLLNY) and 315–334 (SITDDLDNIEQQVEVLENYL). Residues 276-334 (SLTDDQVANMREQLEGLLNYKKSEKTQGGSKLSKRINIRSITDDLDNIEQQVEVLENYL) are 2 X 20 AA approximate repeats. Residues 307–349 (LSKRINIRSITDDLDNIEQQVEVLENYLNNKRHELQALQAEIN) are a coiled coil.

It belongs to the END3 family. As to quaternary structure, component of the PAN1 actin cytoskeleton-regulatory complex composed of at least END3, PAN1, and SLA1. Interacts with SCD5, SLA2 and YAP1802. Interacts directly with PAN1; the interaction with PAN1 is prevented by PAN1 phosphorylation by PKR1.

The protein resides in the cell membrane. The protein localises to the endosome membrane. It is found in the cytoplasm. Its subcellular location is the cytoskeleton. It localises to the actin patch. Functionally, component of the PAN1 actin cytoskeleton-regulatory complex required for the internalization of endosomes during actin-coupled endocytosis. The complex links the site of endocytosis to the cell membrane-associated actin cytoskeleton. Mediates uptake of external molecules and vacuolar degradation of plasma membrane proteins. Plays a role in the proper organization of the cell membrane-associated actin cytoskeleton and promotes its destabilization. END3 regulates PAN1 function by preventing phosphorylation of PAN1 by PKR1 and is also involved in the correct localization of SLA1 to the cell cortex, in the bipolar budding of diploid cells and the correct distribution of chitin at the cell surface. In Saccharomyces cerevisiae (strain ATCC 204508 / S288c) (Baker's yeast), this protein is Actin cytoskeleton-regulatory complex protein END3 (END3).